A 315-amino-acid chain; its full sequence is MRLVFAGTPEPAVVALQKLIDSDHEVVAVLTQPDARRGRGRTLHPSAVAELAQQHGIEVLKPTSLKADTEDGQAIRQRLAELAPDCLPVVAYGQLITKDLLDVAPHGWVNLHFSLLPAWRGAAPVQASIREGDQITGATTFRIDEGLDTGVILSTIEDTIQPTDTADDLLTRLAYSGGDLLVETMTGLEQGTITPRAQEGEATYASKITTQDAQIDWSKPAEVIDRHIRAHTPGPGAWTTLVDARLKVGPISHSGEVEVAADLAPGAILAQKNSVVVGTGTTPIVLGNIQPPGKKMMNAADWARGVQLDQEAKFQ.

114-117 (SLLP) contacts (6S)-5,6,7,8-tetrahydrofolate.

Belongs to the Fmt family.

The catalysed reaction is L-methionyl-tRNA(fMet) + (6R)-10-formyltetrahydrofolate = N-formyl-L-methionyl-tRNA(fMet) + (6S)-5,6,7,8-tetrahydrofolate + H(+). In terms of biological role, attaches a formyl group to the free amino group of methionyl-tRNA(fMet). The formyl group appears to play a dual role in the initiator identity of N-formylmethionyl-tRNA by promoting its recognition by IF2 and preventing the misappropriation of this tRNA by the elongation apparatus. This Corynebacterium glutamicum (strain R) protein is Methionyl-tRNA formyltransferase.